The sequence spans 128 residues: NADPH-dependent 7-cyano-7-deazaguanine reductase (128 aa).

Cys34 (thioimide intermediate) is an active-site residue. The active-site Proton donor is Asp41. Residues 56–58 (IEL) and 75–76 (HE) each bind substrate.

The protein belongs to the GTP cyclohydrolase I family. QueF type 1 subfamily.

The protein localises to the cytoplasm. It carries out the reaction 7-aminomethyl-7-carbaguanine + 2 NADP(+) = 7-cyano-7-deazaguanine + 2 NADPH + 3 H(+). It functions in the pathway tRNA modification; tRNA-queuosine biosynthesis. Its function is as follows. Catalyzes the NADPH-dependent reduction of 7-cyano-7-deazaguanine (preQ0) to 7-aminomethyl-7-deazaguanine (preQ1). The polypeptide is NADPH-dependent 7-cyano-7-deazaguanine reductase (Ruthia magnifica subsp. Calyptogena magnifica).